Here is a 1012-residue protein sequence, read N- to C-terminus: Roundabout homolog 4 (1012 aa).

An N-terminal signal peptide occupies residues 1–27 (MGSGGTGLLGTEWPLPLLLLFIMGGEA). 2 Ig-like C2-type domains span residues 32–132 (PQIL…ARLS) and 138–225 (EDFQ…ARVS). 2 disulfides stabilise this stretch: Cys-53–Cys-115 and Cys-159–Cys-208. Asn-201 and Asn-247 each carry an N-linked (GlcNAc...) asparagine glycan. Fibronectin type-III domains lie at 249–346 (TLLN…LPEQ) and 348–443 (PSAP…LEQA). N-linked (GlcNAc...) asparagine glycans are attached at residues Asn-361, Asn-390, and Asn-397. Disordered stretches follow at residues 533–553 (TSGSRDLSSSSSLSSRLGLDP) and 586–616 (LIAEQPSSPPVRPSPKTPAARRFPSKLAGTS). A compositionally biased stretch (low complexity) spans 534 to 550 (SGSRDLSSSSSLSSRLG). The span at 592 to 601 (SSPPVRPSPK) shows a compositional bias: pro residues. Residues Asn-681 and Asn-713 are each glycosylated (N-linked (GlcNAc...) asparagine). Residues 711–801 (HRNSSELASR…LEEEEDQDSV (91 aa)) are disordered. Residues 745-759 (LQAPSSDPLPAAPLS) are compositionally biased toward low complexity. A compositionally biased stretch (polar residues) spans 760–771 (VLNSSRPSSPQA). 2 N-linked (GlcNAc...) asparagine glycosylation sites follow: Asn-762 and Asn-783. Low complexity predominate over residues 772–791 (SFLSCPSPSSSNLSSSSLSS). Phosphoserine occurs at positions 814 and 947. The tract at residues 980 to 1012 (RLGRGLPPWPPDSRASSQRSWLTGAVPKAGDSS) is disordered.

This sequence belongs to the immunoglobulin superfamily. ROBO family. Interacts with SLIT2 and ENAH. In terms of tissue distribution, expressed specifically in embryo and adult vascular endothelium.

Receptor for Slit proteins, at least for SLIT2, and seems to be involved in angiogenesis and vascular patterning. May mediate the inhibition of primary endothelial cell migration by Slit proteins. Involved in the maintenance of endothelial barrier organization and function. The polypeptide is Roundabout homolog 4 (Robo4) (Mus musculus (Mouse)).